We begin with the raw amino-acid sequence, 1486 residues long: Chromosome partition protein MukB (1486 aa).

34–41 (GGNGAGKS) provides a ligand contact to ATP. Coiled-coil stretches lie at residues 326 to 418 (LEAD…QYNQ), 444 to 480 (LETFQAKELEATEKMLSLEQKMSMAQTAHSQFEQAYQ), and 509 to 603 (RHLA…RAPV). The tract at residues 666–783 (PGGSEDQRLN…EVPLFGRAAR (118 aa)) is flexible hinge. 3 coiled-coil regions span residues 835–923 (EAEI…AKLE), 977–1115 (EMLS…TAKA), and 1209–1266 (VEAI…QNVS).

This sequence belongs to the SMC family. MukB subfamily. In terms of assembly, homodimerization via its hinge domain. Binds to DNA via its C-terminal region. Interacts, and probably forms a ternary complex, with MukE and MukF via its C-terminal region. The complex formation is stimulated by calcium or magnesium. Interacts with tubulin-related protein FtsZ.

The protein localises to the cytoplasm. The protein resides in the nucleoid. Its function is as follows. Plays a central role in chromosome condensation, segregation and cell cycle progression. Functions as a homodimer, which is essential for chromosome partition. Involved in negative DNA supercoiling in vivo, and by this means organize and compact chromosomes. May achieve or facilitate chromosome segregation by condensation DNA from both sides of a centrally located replisome during cell division. This chain is Chromosome partition protein MukB, found in Escherichia coli O6:H1 (strain CFT073 / ATCC 700928 / UPEC).